A 714-amino-acid chain; its full sequence is Stellatatriene synthase (714 aa).

The stellata-2,6,19-trien synthase stretch occupies residues 1–325 (MEYKFSTVVD…RYNSSGSFSD (325 aa)). 2 residues coordinate Mg(2+): Asp-92 and Asp-96. A DDXXD motif 1 motif is present at residues 92–96 (DDVTD). The short motif at 276-284 (YLKIVEEYK) is the NSE motif element. The interval 326 to 713 (HQLELMKNGV…LRLIMELLKT (388 aa)) is geranylgeranyl diphosphate synthase. Positions 332 to 356 (KNGVPKDPASGSTNGTSNGTSNGTS) are disordered. Residues 341-356 (SGSTNGTSNGTSNGTS) show a composition bias toward low complexity. The isopentenyl diphosphate site is built by Lys-434, Arg-437, and His-466. The Mg(2+) site is built by Asp-473 and Asp-477. Residues 473 to 477 (DDVED) carry the DDXXD motif 2 motif. Arg-482 lines the dimethylallyl diphosphate pocket. Isopentenyl diphosphate is bound at residue Arg-483. Residues Lys-560, Thr-561, Gln-596, Asn-603, Lys-613, and Lys-623 each contribute to the dimethylallyl diphosphate site.

The protein in the N-terminal section; belongs to the terpene synthase family. It in the C-terminal section; belongs to the FPP/GGPP synthase family. In terms of assembly, hexamer.

It catalyses the reaction 4 isopentenyl diphosphate + dimethylallyl diphosphate = (2E,6E,10E,14E)-geranylfarnesyl diphosphate + 4 diphosphate. The catalysed reaction is (2E,6E,10E,14E)-geranylfarnesyl diphosphate = stellata-2,6,19-triene + diphosphate. Its pathway is secondary metabolite biosynthesis; terpenoid biosynthesis. Multifunctional diterpene synthase; part of the gene cluster that mediates the biosynthesis of the sesterterpene stellatic acid. The first step in the pathway is performed by the stellatatriene synthase that possesses both prenyl transferase and terpene cyclase activity, converting isopentenyl diphosphate and dimethylallyl diphosphate into geranylgeranyl diphosphate (GGDP) and then converting GGDP into stellata-2,6,19-triene. The cytochrome P450 monooxygenase Stl-P450 then catalyzes three successive oxidation reactions on the C-20 methyl group to generate the carboxylic acid of stellatic acid. This is Stellatatriene synthase from Emericella variicolor (Aspergillus stellatus).